Reading from the N-terminus, the 788-residue chain is Integrin beta-6 (788 aa).

The first 21 residues, 1–21 (MGIELLCLFFLFLGRNDHVQG), serve as a signal peptide directing secretion. The region spanning 22-71 (GCALGGAETCEDCLLIGPQCAWCAQENFTHPSGVGERCDTPANLLAKGCQ) is the PSI domain. Topologically, residues 22–709 (GCALGGAETC…KDCPKPPNIP (688 aa)) are extracellular. Intrachain disulfides connect Cys23-Cys41, Cys31-Cys454, Cys34-Cys59, Cys44-Cys70, Cys197-Cys204, Cys252-Cys293, Cys394-Cys406, Cys426-Cys452, Cys456-Cys476, Cys467-Cys479, Cys481-Cys490, Cys492-Cys519, Cys502-Cys517, Cys511-Cys522, Cys524-Cys537, Cys539-Cys560, Cys544-Cys558, Cys552-Cys563, and Cys565-Cys574. 2 N-linked (GlcNAc...) asparagine glycosylation sites follow: Asn48 and Asn97. A VWFA domain is found at 131–371 (YPVDLYYLMD…QLIISAYEEL (241 aa)). Residues Asp140, Ser142, and Ser144 each contribute to the Mg(2+) site. Ser144, Asp147, Asp148, and Glu179 together coordinate Ca(2+). Residues Asn235, Asp237, Pro239, and Glu240 each contribute to the Ca(2+) site. Residue Glu240 coordinates Mg(2+). Asn260 carries an N-linked (GlcNAc...) asparagine glycan. Ca(2+) contacts are provided by Asp271 and Lys355. N-linked (GlcNAc...) asparagine glycans are attached at residues Asn387 and Asn396. 4 I-EGF domains span residues 456-491 (CQKEVEVNSSKCHHGNGSFQCGVCACHPGHMGPRCE), 492-538 (CGED…PYCQ), 539-575 (CDNFSCVRHKGLLCGGNGDCDCGECVCRSGWTGEYCN), and 576-615 (CTTSTDSCVSEDGVLCSGRGDCVCGKCVCTNPGASGPTCE). Asn463 and Asn471 each carry an N-linked (GlcNAc...) asparagine glycan. A glycan (N-linked (GlcNAc...) asparagine) is linked at Asn541. Residue Asn575 is glycosylated (N-linked (GlcNAc...) asparagine). 9 disulfide bridges follow: Cys576–Cys599, Cys583–Cys597, Cys591–Cys602, Cys604–Cys614, Cys617–Cys620, Cys624–Cys670, Cys630–Cys649, Cys633–Cys645, and Cys678–Cys702. A helical transmembrane segment spans residues 710 to 730 (MIMLGVSLAILLIGVVLLCIW). An interaction with HAX1 region spans residues 731–758 (KLLVSFHDRKEVAKFEAERSKAKWQTGT). Residues 731–788 (KLLVSFHDRKEVAKFEAERSKAKWQTGTNPLYRGSTSTFKNVTYKHREKQKVDLSTDC) lie on the Cytoplasmic side of the membrane.

It belongs to the integrin beta chain family. As to quaternary structure, heterodimer of an alpha and a beta subunit. Interacts with FLNB. Interacts with HAX1. ITGAV:ITGB6 interacts with FBN1. ITGAV:ITGB6 interacts with TGFB1. (Microbial infection) Integrin ITGAV:ITGB6 interacts with coxsackievirus A9, coxsackievirus B1 capsid proteins. In terms of assembly, (Microbial infection) Integrin ITGAV:ITGB6 interacts with herpes simplex virus-1/HHV-1 gH:gL proteins.

The protein localises to the cell membrane. Its subcellular location is the cell junction. The protein resides in the focal adhesion. In terms of biological role, integrin alpha-V:beta-6 (ITGAV:ITGB6) is a receptor for fibronectin and cytotactin. It recognizes the sequence R-G-D in its ligands. Internalization of integrin alpha-V/beta-6 via clathrin-mediated endocytosis promotes carcinoma cell invasion. ITGAV:ITGB6 acts as a receptor for fibrillin-1 (FBN1) and mediates R-G-D-dependent cell adhesion to FBN1. Integrin alpha-V:beta-6 (ITGAV:ITGB6) mediates R-G-D-dependent release of transforming growth factor beta-1 (TGF-beta-1) from regulatory Latency-associated peptide (LAP), thereby playing a key role in TGF-beta-1 activation. Functionally, (Microbial infection) Integrin ITGAV:ITGB6 acts as a receptor for Coxsackievirus A9 and Coxsackievirus B1. Its function is as follows. (Microbial infection) Integrin ITGAV:ITGB6 acts as a receptor for Herpes simplex virus-1/HHV-1. This Homo sapiens (Human) protein is Integrin beta-6 (ITGB6).